The sequence spans 311 residues: Putative S-adenosyl-L-methionine-dependent methyltransferase MUL_4761 (311 aa).

S-adenosyl-L-methionine is bound by residues D132 and 161–162 (DL).

This sequence belongs to the UPF0677 family.

Functionally, exhibits S-adenosyl-L-methionine-dependent methyltransferase activity. This Mycobacterium ulcerans (strain Agy99) protein is Putative S-adenosyl-L-methionine-dependent methyltransferase MUL_4761.